A 289-amino-acid chain; its full sequence is Acetyl-coenzyme A carboxylase carboxyl transferase subunit beta (289 aa).

In terms of domain architecture, CoA carboxyltransferase N-terminal spans methionine 36–glutamate 289. Residues cysteine 40, cysteine 43, cysteine 58, and cysteine 61 each coordinate Zn(2+). Residues cysteine 40–cysteine 61 form a C4-type zinc finger.

Belongs to the AccD/PCCB family. Acetyl-CoA carboxylase is a heterohexamer composed of biotin carboxyl carrier protein (AccB), biotin carboxylase (AccC) and two subunits each of ACCase subunit alpha (AccA) and ACCase subunit beta (AccD). Zn(2+) is required as a cofactor.

It localises to the cytoplasm. The catalysed reaction is N(6)-carboxybiotinyl-L-lysyl-[protein] + acetyl-CoA = N(6)-biotinyl-L-lysyl-[protein] + malonyl-CoA. It functions in the pathway lipid metabolism; malonyl-CoA biosynthesis; malonyl-CoA from acetyl-CoA: step 1/1. Component of the acetyl coenzyme A carboxylase (ACC) complex. Biotin carboxylase (BC) catalyzes the carboxylation of biotin on its carrier protein (BCCP) and then the CO(2) group is transferred by the transcarboxylase to acetyl-CoA to form malonyl-CoA. The sequence is that of Acetyl-coenzyme A carboxylase carboxyl transferase subunit beta from Limosilactobacillus reuteri subsp. reuteri (strain JCM 1112) (Lactobacillus reuteri).